The primary structure comprises 469 residues: Trigger factor (469 aa).

One can recognise a PPIase FKBP-type domain in the interval 166–245 (GDFLTIDITA…VKSVKERELP (80 aa)). The disordered stretch occupies residues 430-469 (GGEEEAAEAEAAPAVDSDAVEGEAATEEAAPSDDPAAVKF).

Belongs to the FKBP-type PPIase family. Tig subfamily.

The protein resides in the cytoplasm. The enzyme catalyses [protein]-peptidylproline (omega=180) = [protein]-peptidylproline (omega=0). Its function is as follows. Involved in protein export. Acts as a chaperone by maintaining the newly synthesized protein in an open conformation. Functions as a peptidyl-prolyl cis-trans isomerase. This chain is Trigger factor, found in Arthrobacter sp. (strain FB24).